Reading from the N-terminus, the 442-residue chain is Asparagine--tRNA ligase (442 aa).

The protein belongs to the class-II aminoacyl-tRNA synthetase family. In terms of assembly, homodimer.

The protein localises to the cytoplasm. It carries out the reaction tRNA(Asn) + L-asparagine + ATP = L-asparaginyl-tRNA(Asn) + AMP + diphosphate + H(+). The chain is Asparagine--tRNA ligase from Koribacter versatilis (strain Ellin345).